The sequence spans 570 residues: Phosphocholine hydrolase Lem3 (570 aa).

It localises to the secreted. The protein localises to the host cytoplasm. The catalysed reaction is [Rab1 protein]-O-phosphocholine-L-serine + H2O = [Rab1 protein]-L-serine + phosphocholine + H(+). Virulence effector that plays a role in hijacking the host vesicular trafficking by recruiting the small guanosine triphosphatase (GTPase) Rab1 to the cytosolic face of the Legionella-containing vacuole (LCVs). Acts as a phosphocholine hydrolase by mediating the hydrolysis of phosphocholine to Ser residues of host RAB1 (RAB1A, RAB1B or RAB1C). Dephosphocholination of target proteins restores accessibility to GTPase effector LepB. Can act on both GDP-bound and GTP-bound Rab proteins. This is Phosphocholine hydrolase Lem3 (lem3) from Legionella pneumophila subsp. pneumophila (strain Philadelphia 1 / ATCC 33152 / DSM 7513).